We begin with the raw amino-acid sequence, 752 residues long: DNA topoisomerase 4 subunit A (752 aa).

One can recognise a Topo IIA-type catalytic domain in the interval 31–494; sequence LPFIGDGLKP…EAKAMSEHDM (464 aa). Tyr-120 functions as the O-(5'-phospho-DNA)-tyrosine intermediate in the catalytic mechanism. Disordered stretches follow at residues 472 to 492 and 718 to 752; these read YGDD…MSEH and TGER…DSEE. 2 stretches are compositionally biased toward basic and acidic residues: residues 473–492 and 732–743; these read GDDR…MSEH and QRIDRVEIDSPR.

It belongs to the type II topoisomerase GyrA/ParC subunit family. ParC type 1 subfamily. Heterotetramer composed of ParC and ParE.

The protein resides in the cell membrane. The enzyme catalyses ATP-dependent breakage, passage and rejoining of double-stranded DNA.. Topoisomerase IV is essential for chromosome segregation. It relaxes supercoiled DNA. Performs the decatenation events required during the replication of a circular DNA molecule. In Escherichia coli O157:H7, this protein is DNA topoisomerase 4 subunit A.